The chain runs to 604 residues: Phosphomethylpyrimidine synthase (604 aa).

Substrate-binding positions include Asn-218, Met-247, Tyr-276, His-312, 332–334 (SRG), 373–376 (DGLR), and Glu-412. His-416 provides a ligand contact to Zn(2+). Tyr-439 is a substrate binding site. His-480 lines the Zn(2+) pocket. 3 residues coordinate [4Fe-4S] cluster: Cys-560, Cys-563, and Cys-568.

This sequence belongs to the ThiC family. As to quaternary structure, homodimer. The cofactor is [4Fe-4S] cluster.

The enzyme catalyses 5-amino-1-(5-phospho-beta-D-ribosyl)imidazole + S-adenosyl-L-methionine = 4-amino-2-methyl-5-(phosphooxymethyl)pyrimidine + CO + 5'-deoxyadenosine + formate + L-methionine + 3 H(+). It participates in cofactor biosynthesis; thiamine diphosphate biosynthesis. Its function is as follows. Catalyzes the synthesis of the hydroxymethylpyrimidine phosphate (HMP-P) moiety of thiamine from aminoimidazole ribotide (AIR) in a radical S-adenosyl-L-methionine (SAM)-dependent reaction. This Zymomonas mobilis subsp. mobilis (strain ATCC 31821 / ZM4 / CP4) protein is Phosphomethylpyrimidine synthase.